The chain runs to 436 residues: UPF0597 protein YhaM (436 aa).

It belongs to the UPF0597 family.

The polypeptide is UPF0597 protein YhaM (Shigella boydii serotype 18 (strain CDC 3083-94 / BS512)).